A 763-amino-acid polypeptide reads, in one-letter code: Phosphoglycerol transferase I (763 aa).

4 consecutive transmembrane segments (helical) span residues 1-21, 26-46, 77-97, and 108-128; these read MSELLSFALFLASVLIYAWKA, WWFAATLTVLGLFVVLNITLF, ILPGIGIVLGLTAVFGALGWI, and FGYSLLALLLALGSVDASPAF.

This sequence belongs to the OpgB family.

Its subcellular location is the cell inner membrane. It carries out the reaction a phosphatidylglycerol + a membrane-derived-oligosaccharide D-glucose = a 1,2-diacyl-sn-glycerol + a membrane-derived-oligosaccharide 6-(glycerophospho)-D-glucose.. The protein operates within glycan metabolism; osmoregulated periplasmic glucan (OPG) biosynthesis. Transfers a phosphoglycerol residue from phosphatidylglycerol to the membrane-bound nascent glucan backbones. This chain is Phosphoglycerol transferase I, found in Escherichia coli O45:K1 (strain S88 / ExPEC).